The chain runs to 153 residues: 6,7-dimethyl-8-ribityllumazine synthase (153 aa).

5-amino-6-(D-ribitylamino)uracil contacts are provided by residues Phe-22, 56–58 (AFE), and 80–82 (TVI). 85-86 (ST) provides a ligand contact to (2S)-2-hydroxy-3-oxobutyl phosphate. His-88 functions as the Proton donor in the catalytic mechanism. Phe-113 contacts 5-amino-6-(D-ribitylamino)uracil. (2S)-2-hydroxy-3-oxobutyl phosphate is bound at residue Arg-127.

This sequence belongs to the DMRL synthase family. Forms an icosahedral capsid composed of 60 subunits, arranged as a dodecamer of pentamers.

The enzyme catalyses (2S)-2-hydroxy-3-oxobutyl phosphate + 5-amino-6-(D-ribitylamino)uracil = 6,7-dimethyl-8-(1-D-ribityl)lumazine + phosphate + 2 H2O + H(+). It functions in the pathway cofactor biosynthesis; riboflavin biosynthesis; riboflavin from 2-hydroxy-3-oxobutyl phosphate and 5-amino-6-(D-ribitylamino)uracil: step 1/2. In terms of biological role, catalyzes the formation of 6,7-dimethyl-8-ribityllumazine by condensation of 5-amino-6-(D-ribitylamino)uracil with 3,4-dihydroxy-2-butanone 4-phosphate. This is the penultimate step in the biosynthesis of riboflavin. The protein is 6,7-dimethyl-8-ribityllumazine synthase of Actinobacillus pleuropneumoniae serotype 5b (strain L20).